A 368-amino-acid polypeptide reads, in one-letter code: UDP-N-acetylglucosamine--N-acetylmuramyl-(pentapeptide) pyrophosphoryl-undecaprenol N-acetylglucosamine transferase (368 aa).

Residues 16–18, N130, R171, S197, and Q296 contribute to the UDP-N-acetyl-alpha-D-glucosamine site; that span reads TGG.

This sequence belongs to the glycosyltransferase 28 family. MurG subfamily.

It is found in the cell inner membrane. The enzyme catalyses di-trans,octa-cis-undecaprenyl diphospho-N-acetyl-alpha-D-muramoyl-L-alanyl-D-glutamyl-meso-2,6-diaminopimeloyl-D-alanyl-D-alanine + UDP-N-acetyl-alpha-D-glucosamine = di-trans,octa-cis-undecaprenyl diphospho-[N-acetyl-alpha-D-glucosaminyl-(1-&gt;4)]-N-acetyl-alpha-D-muramoyl-L-alanyl-D-glutamyl-meso-2,6-diaminopimeloyl-D-alanyl-D-alanine + UDP + H(+). The protein operates within cell wall biogenesis; peptidoglycan biosynthesis. Its function is as follows. Cell wall formation. Catalyzes the transfer of a GlcNAc subunit on undecaprenyl-pyrophosphoryl-MurNAc-pentapeptide (lipid intermediate I) to form undecaprenyl-pyrophosphoryl-MurNAc-(pentapeptide)GlcNAc (lipid intermediate II). The sequence is that of UDP-N-acetylglucosamine--N-acetylmuramyl-(pentapeptide) pyrophosphoryl-undecaprenol N-acetylglucosamine transferase from Acidiphilium cryptum (strain JF-5).